We begin with the raw amino-acid sequence, 354 residues long: tRNA N6-adenosine threonylcarbamoyltransferase (354 aa).

The Fe cation site is built by H116 and H120. Residues 139–143, D172, G185, and N281 each bind substrate; that span reads LVSGG. D309 provides a ligand contact to Fe cation.

The protein belongs to the KAE1 / TsaD family. Fe(2+) serves as cofactor.

It is found in the cytoplasm. The catalysed reaction is L-threonylcarbamoyladenylate + adenosine(37) in tRNA = N(6)-L-threonylcarbamoyladenosine(37) in tRNA + AMP + H(+). Required for the formation of a threonylcarbamoyl group on adenosine at position 37 (t(6)A37) in tRNAs that read codons beginning with adenine. Is involved in the transfer of the threonylcarbamoyl moiety of threonylcarbamoyl-AMP (TC-AMP) to the N6 group of A37, together with TsaE and TsaB. TsaD likely plays a direct catalytic role in this reaction. This Parasynechococcus marenigrum (strain WH8102) protein is tRNA N6-adenosine threonylcarbamoyltransferase.